The chain runs to 626 residues: Basic helix-loop-helix ARNT-like protein 1 (626 aa).

The disordered stretch occupies residues 1 to 60 (MADQRMDISSTISDFMSPGATDLLSSPLGTSGMDCNRKRKGSSTDYQESMDTDKDDPHGR). Position 17 is a phosphoserine; by GSK3-beta (S17). Phosphothreonine; by GSK3-beta is present on T21. A Nuclear localization signal motif is present at residues 36 to 41 (NRKRKG). Residues 51–60 (DTDKDDPHGR) show a composition bias toward basic and acidic residues. Positions 72 to 125 (NAREAHSQIEKRRRDKMNSFIDELASLVPTCNAMSRKLDKLTVLRMAVQHMKTL) constitute a bHLH domain. S78 carries the phosphoserine modification. Position 90 is a phosphoserine; by CK2 (S90). The Nuclear export signal 1 motif lies at 142-152 (LSDDELKHLIL). One can recognise a PAS 1 domain in the interval 143–215 (SDDELKHLIL…EQLSSSDTAP (73 aa)). Residue K252 forms a Glycyl lysine isopeptide (Lys-Gly) (interchain with G-Cter in SUMO2 and SUMO3) linkage. K259 participates in a covalent cross-link: Glycyl lysine isopeptide (Lys-Gly) (interchain with G-Cter in SUMO); alternate. K259 participates in a covalent cross-link: Glycyl lysine isopeptide (Lys-Gly) (interchain with G-Cter in SUMO2); alternate. The 71-residue stretch at 326–396 (PQPVNGEIRV…ECHRQVLQTR (71 aa)) folds into the PAS 2 domain. The Nuclear export signal 2 motif lies at 361–369 (LAYLPQELL). Positions 401 to 444 (TNCYKFKIKDGSFITLRSRWFSFMNPWTKEVEYIVSTNTVVLAN) constitute a PAC domain. Disordered regions lie at residues 457–493 (TASP…AGAG) and 510–597 (RGSS…SNDE). Positions 484–493 (IPGGTRAGAG) are enriched in gly residues. An interaction with CIART region spans residues 508 to 588 (RIRGSSPSSC…IGIDMIDNDQ (81 aa)). The segment covering 511–521 (GSSPSSCGSSP) has biased composition (low complexity). K538 is subject to N6-acetyllysine.

In terms of assembly, component of the circadian clock oscillator which includes the CRY1/2 proteins, CLOCK or NPAS2, BMAL1 or BMAL2, CSNK1D and/or CSNK1E, TIMELESS and the PER1/2/3 proteins. Forms a heterodimer with CLOCK. The CLOCK-BMAL1 heterodimer is required for E-box-dependent transactivation, for CLOCK nuclear translocation and degradation, and, for phosphorylation of both CLOCK and BMAL1. Part of a nuclear complex which also includes RACK1 and PRKCA; RACK1 and PRKCA are recruited to the complex in a circadian manner. Interacts with NPAS2. Interacts with EZH2. Interacts with SUMO3. Interacts with SIRT1. Interacts with AHR. Interacts with ID1, ID2 and ID3. Interacts with DDX4. Interacts with OGT. Interacts with EED and SUZ12. Interacts with MTA1. Interacts with CIART. Interacts with HSP90. Interacts with KAT2B and EP300. Interacts with BHLHE40/DEC1 and BHLHE41/DEC2. Interacts with RELB and the interaction is enhanced in the presence of CLOCK. Interacts with PER1, PER2, CRY1 and CRY2 and this interaction requires a translocation to the nucleus. Interaction of the CLOCK-BMAL1 heterodimer with PER or CRY inhibits transcription activation. Interaction of the CLOCK-BMAL1 with CRY1 is independent of DNA but with PER2 is off DNA. The CLOCK-BMAL1 heterodimer interacts with GSK3B. Interacts with KDM5A. Interacts with KMT2A; in a circadian manner. Interacts with UBE3A. Interacts with PRKCG. Interacts with MAGEL2. Interacts with NCOA2. Interacts with THRAP3. The CLOCK-BMAL1 heterodimer interacts with PASD1. Interacts with PASD1. Interacts with USP9X. Interacts with PIWIL2 (via PIWI domain). Interacts with HDAC3. Interacts with HNF4A. In terms of processing, ubiquitinated, leading to its proteasomal degradation. Deubiquitinated by USP9X. O-glycosylated; contains O-GlcNAc. O-glycosylation by OGT prevents protein degradation by inhibiting ubiquitination. It also stabilizes the CLOCK-BMAL1 heterodimer thereby increasing CLOCK-BMAL1-mediated transcription of genes in the negative loop of the circadian clock such as PER1/2/3 and CRY1/2. Post-translationally, acetylated on Lys-538 by CLOCK during the repression phase of the circadian cycle. Acetylation facilitates recruitment of CRY1 protein and initiates the repression phase of the circadian cycle. Acetylated at Lys-538 by KAT5 during the activation phase of the cycle, leading to recruitment of the positive transcription elongation factor b (P-TEFb) and BRD4, followed by productive elongation of circadian transcripts. Deacetylated by SIRT1, which may result in decreased protein stability. In terms of processing, phosphorylated upon dimerization with CLOCK. Phosphorylation enhances the transcriptional activity, alters the subcellular localization and decreases the stability of the CLOCK-BMAL1 heterodimer by promoting its degradation. Phosphorylation shows circadian variations in the liver with a peak between CT10 to CT14. Phosphorylation at Ser-90 by CK2 is essential for its nuclear localization, its interaction with CLOCK and controls CLOCK nuclear entry. Dephosphorylation at Ser-78 is important for dimerization with CLOCK and transcriptional activity. Sumoylated on Lys-259 upon dimerization with CLOCK. Predominantly conjugated to poly-SUMO2/3 rather than SUMO1 and the level of these conjugates undergo rhythmic variation, peaking at CT9-CT12. Sumoylation localizes it exclusively to the PML body and promotes its ubiquitination in the PML body, ubiquitin-dependent proteasomal degradation and the transcriptional activity of the CLOCK-BMAL1 heterodimer. Post-translationally, undergoes lysosome-mediated degradation in a time-dependent manner in the liver.

It is found in the nucleus. The protein localises to the cytoplasm. The protein resides in the PML body. Transcriptional activator which forms a core component of the circadian clock. The circadian clock, an internal time-keeping system, regulates various physiological processes through the generation of approximately 24 hour circadian rhythms in gene expression, which are translated into rhythms in metabolism and behavior. It is derived from the Latin roots 'circa' (about) and 'diem' (day) and acts as an important regulator of a wide array of physiological functions including metabolism, sleep, body temperature, blood pressure, endocrine, immune, cardiovascular, and renal function. Consists of two major components: the central clock, residing in the suprachiasmatic nucleus (SCN) of the brain, and the peripheral clocks that are present in nearly every tissue and organ system. Both the central and peripheral clocks can be reset by environmental cues, also known as Zeitgebers (German for 'timegivers'). The predominant Zeitgeber for the central clock is light, which is sensed by retina and signals directly to the SCN. The central clock entrains the peripheral clocks through neuronal and hormonal signals, body temperature and feeding-related cues, aligning all clocks with the external light/dark cycle. Circadian rhythms allow an organism to achieve temporal homeostasis with its environment at the molecular level by regulating gene expression to create a peak of protein expression once every 24 hours to control when a particular physiological process is most active with respect to the solar day. Transcription and translation of core clock components (CLOCK, NPAS2, BMAL1, BMAL2, PER1, PER2, PER3, CRY1 and CRY2) plays a critical role in rhythm generation, whereas delays imposed by post-translational modifications (PTMs) are important for determining the period (tau) of the rhythms (tau refers to the period of a rhythm and is the length, in time, of one complete cycle). A diurnal rhythm is synchronized with the day/night cycle, while the ultradian and infradian rhythms have a period shorter and longer than 24 hours, respectively. Disruptions in the circadian rhythms contribute to the pathology of cardiovascular diseases, cancer, metabolic syndromes and aging. A transcription/translation feedback loop (TTFL) forms the core of the molecular circadian clock mechanism. Transcription factors, CLOCK or NPAS2 and BMAL1 or BMAL2, form the positive limb of the feedback loop, act in the form of a heterodimer and activate the transcription of core clock genes and clock-controlled genes (involved in key metabolic processes), harboring E-box elements (5'-CACGTG-3') within their promoters. The core clock genes: PER1/2/3 and CRY1/2 which are transcriptional repressors form the negative limb of the feedback loop and interact with the CLOCK|NPAS2-BMAL1|BMAL2 heterodimer inhibiting its activity and thereby negatively regulating their own expression. This heterodimer also activates nuclear receptors NR1D1, NR1D2, RORA, RORB and RORG, which form a second feedback loop and which activate and repress BMAL1 transcription, respectively. BMAL1 positively regulates myogenesis and negatively regulates adipogenesis via the transcriptional control of the genes of the canonical Wnt signaling pathway. Plays a role in normal pancreatic beta-cell function; regulates glucose-stimulated insulin secretion via the regulation of antioxidant genes NFE2L2/NRF2 and its targets SESN2, PRDX3, CCLC and CCLM. Negatively regulates the mTORC1 signaling pathway; regulates the expression of MTOR and DEPTOR. Controls diurnal oscillations of Ly6C inflammatory monocytes; rhythmic recruitment of the PRC2 complex imparts diurnal variation to chemokine expression that is necessary to sustain Ly6C monocyte rhythms. Regulates the expression of HSD3B2, STAR, PTGS2, CYP11A1, CYP19A1 and LHCGR in the ovary and also the genes involved in hair growth. Plays an important role in adult hippocampal neurogenesis by regulating the timely entry of neural stem/progenitor cells (NSPCs) into the cell cycle and the number of cell divisions that take place prior to cell-cycle exit. Regulates the circadian expression of CIART. The CLOCK-BMAL1 heterodimer regulates the circadian expression of SERPINE1/PAI1, VWF, B3, CCRN4L/NOC, NAMPT, DBP, MYOD1, PPARGC1A, PPARGC1B, SIRT1, GYS2, F7, NGFR, GNRHR, BHLHE40/DEC1, ATF4, MTA1 and also genes implicated in glucose and lipid metabolism. Promotes rhythmic chromatin opening, regulating the DNA accessibility of other transcription factors. The NPAS2-BMAL1 heterodimer positively regulates the expression of MAOA, F7 and LDHA and modulates the circadian rhythm of daytime contrast sensitivity by regulating the rhythmic expression of adenylate cyclase type 1 (ADCY1) in the retina. The preferred binding motif for the CLOCK-BMAL1 heterodimer is 5'-CACGTGA-3', which contains a flanking adenine nucleotide at the 3-prime end of the canonical 6-nucleotide E-box sequence. CLOCK specifically binds to the half-site 5'-CAC-3', while BMAL1 binds to the half-site 5'-GTGA-3'. The CLOCK-BMAL1 heterodimer also recognizes the non-canonical E-box motifs 5'-AACGTGA-3' and 5'-CATGTGA-3'. Essential for the rhythmic interaction of CLOCK with ASS1 and plays a critical role in positively regulating CLOCK-mediated acetylation of ASS1. Plays a role in protecting against lethal sepsis by limiting the expression of immune checkpoint protein CD274 in macrophages in a PKM2-dependent manner. Regulates the diurnal rhythms of skeletal muscle metabolism via transcriptional activation of genes promoting triglyceride synthesis (DGAT2) and metabolic efficiency (COQ10B). The protein is Basic helix-loop-helix ARNT-like protein 1 (BMAL1) of Equus caballus (Horse).